The sequence spans 347 residues: Holliday junction branch migration complex subunit RuvB (347 aa).

The large ATPase domain (RuvB-L) stretch occupies residues 13 to 195 (NEDAVTSGEV…FGIVEHMQYY (183 aa)). ATP-binding positions include Leu34, Arg35, Gly76, Lys79, Thr80, Thr81, 142–144 (EDY), Arg185, Tyr195, and Arg232. Thr80 is a binding site for Mg(2+). A small ATPAse domain (RuvB-S) region spans residues 196–266 (TIDELEKIVQ…TTEGALKQLQ (71 aa)). The head domain (RuvB-H) stretch occupies residues 269-347 (DEGLDQTDRR…QLGLPVPGDK (79 aa)). Arg329 contacts DNA.

The protein belongs to the RuvB family. Homohexamer. Forms an RuvA(8)-RuvB(12)-Holliday junction (HJ) complex. HJ DNA is sandwiched between 2 RuvA tetramers; dsDNA enters through RuvA and exits via RuvB. An RuvB hexamer assembles on each DNA strand where it exits the tetramer. Each RuvB hexamer is contacted by two RuvA subunits (via domain III) on 2 adjacent RuvB subunits; this complex drives branch migration. In the full resolvosome a probable DNA-RuvA(4)-RuvB(12)-RuvC(2) complex forms which resolves the HJ.

It localises to the cytoplasm. The enzyme catalyses ATP + H2O = ADP + phosphate + H(+). In terms of biological role, the RuvA-RuvB-RuvC complex processes Holliday junction (HJ) DNA during genetic recombination and DNA repair, while the RuvA-RuvB complex plays an important role in the rescue of blocked DNA replication forks via replication fork reversal (RFR). RuvA specifically binds to HJ cruciform DNA, conferring on it an open structure. The RuvB hexamer acts as an ATP-dependent pump, pulling dsDNA into and through the RuvAB complex. RuvB forms 2 homohexamers on either side of HJ DNA bound by 1 or 2 RuvA tetramers; 4 subunits per hexamer contact DNA at a time. Coordinated motions by a converter formed by DNA-disengaged RuvB subunits stimulates ATP hydrolysis and nucleotide exchange. Immobilization of the converter enables RuvB to convert the ATP-contained energy into a lever motion, pulling 2 nucleotides of DNA out of the RuvA tetramer per ATP hydrolyzed, thus driving DNA branch migration. The RuvB motors rotate together with the DNA substrate, which together with the progressing nucleotide cycle form the mechanistic basis for DNA recombination by continuous HJ branch migration. Branch migration allows RuvC to scan DNA until it finds its consensus sequence, where it cleaves and resolves cruciform DNA. The sequence is that of Holliday junction branch migration complex subunit RuvB from Lactobacillus helveticus (strain DPC 4571).